The primary structure comprises 234 residues: (5-formylfuran-3-yl)methyl phosphate synthase (234 aa).

Catalysis depends on Lys27, which acts as the Schiff-base intermediate with substrate. Lys85 acts as the Proton acceptor in catalysis.

This sequence belongs to the MfnB family.

The enzyme catalyses 2 D-glyceraldehyde 3-phosphate = 4-(hydroxymethyl)-2-furancarboxaldehyde phosphate + phosphate + 2 H2O. It participates in cofactor biosynthesis; methanofuran biosynthesis. In terms of biological role, catalyzes the formation of 4-(hydroxymethyl)-2-furancarboxaldehyde phosphate (4-HFC-P) from two molecules of glyceraldehyde-3-P (GA-3-P). In Methanosarcina barkeri (strain Fusaro / DSM 804), this protein is (5-formylfuran-3-yl)methyl phosphate synthase.